Here is a 422-residue protein sequence, read N- to C-terminus: Ferrochelatase, mitochondrial (422 aa).

Residues 1-53 (MLSASANMAAALRAAGALLREPLVHGSSRACQPWRCQSGAAVAATTEKVHHAK) constitute a mitochondrion transit peptide. Residue Lys-56 is modified to N6-acetyllysine. 3 residues coordinate protoporphyrin IX: Arg-114, Tyr-122, and Ser-129. Position 137 is an N6-succinyllysine (Lys-137). Residue Cys-195 coordinates [2Fe-2S] cluster. The active site involves His-229. Lys-289 carries the post-translational modification N6-acetyllysine; alternate. An N6-succinyllysine; alternate modification is found at Lys-289. The active site involves Asp-382. Residues Cys-402, Cys-405, and Cys-410 each coordinate [2Fe-2S] cluster. Lys-414 carries the N6-acetyllysine; alternate modification. Lys-414 bears the N6-succinyllysine; alternate mark.

This sequence belongs to the ferrochelatase family. As to quaternary structure, homodimer. Homotetramer. Interaction with PGRMC1; the interaction results in decreased FECH activity. Interacts with ABCB10 and SLC25A37; this interaction forms an oligomeric complex. Forms a complex with ABCB7 and ABCB10, where a dimeric FECH bridges ABCB7 and ABCB10 homodimers; this complex may be required for cellular iron homeostasis, mitochondrial function and heme biosynthesis. Interacts with ABCB7 and ABCB10. [2Fe-2S] cluster is required as a cofactor. As to expression, erythroid and hepatic cells.

The protein localises to the mitochondrion inner membrane. It catalyses the reaction heme b + 2 H(+) = protoporphyrin IX + Fe(2+). Its pathway is porphyrin-containing compound metabolism; protoheme biosynthesis; protoheme from protoporphyrin-IX: step 1/1. Functionally, catalyzes the ferrous insertion into protoporphyrin IX. The sequence is that of Ferrochelatase, mitochondrial from Mus musculus (Mouse).